Consider the following 284-residue polypeptide: D-tagatose-1,6-bisphosphate aldolase subunit GatY (284 aa).

The Proton donor role is filled by D82. Zn(2+) contacts are provided by H83 and H180. A dihydroxyacetone phosphate-binding site is contributed by G181. Position 208 (H208) interacts with Zn(2+). Dihydroxyacetone phosphate-binding positions include G209–S211 and N230–T233.

Belongs to the class II fructose-bisphosphate aldolase family. TagBP aldolase GatY subfamily. In terms of assembly, forms a complex with GatZ. Zn(2+) is required as a cofactor.

The enzyme catalyses D-tagatofuranose 1,6-bisphosphate = D-glyceraldehyde 3-phosphate + dihydroxyacetone phosphate. It participates in carbohydrate metabolism; D-tagatose 6-phosphate degradation; D-glyceraldehyde 3-phosphate and glycerone phosphate from D-tagatose 6-phosphate: step 2/2. In terms of biological role, catalytic subunit of the tagatose-1,6-bisphosphate aldolase GatYZ, which catalyzes the reversible aldol condensation of dihydroxyacetone phosphate (DHAP or glycerone-phosphate) with glyceraldehyde 3-phosphate (G3P) to produce tagatose 1,6-bisphosphate (TBP). Requires GatZ subunit for full activity and stability. Is involved in the catabolism of galactitol. This Salmonella newport (strain SL254) protein is D-tagatose-1,6-bisphosphate aldolase subunit GatY.